A 957-amino-acid polypeptide reads, in one-letter code: Melanoma-associated antigen E1 (957 aa).

Residues Met-1–Leu-433 form a disordered region. Composition is skewed to polar residues over residues Ser-85 to Val-96 and Leu-104 to Leu-130. Over residues Thr-138–Pro-156 the composition is skewed to low complexity. 6 stretches are compositionally biased toward polar residues: residues Glu-158–Val-177, Leu-220–Leu-232, Arg-256–Thr-306, Leu-328–Val-344, Arg-364–Val-380, and Thr-414–Lys-428. MAGE domains follow at residues Met-491–Ala-690 and Leu-745–Ala-936. The segment at Ser-743–Arg-957 is interaction with DTNA.

As to quaternary structure, interacts with DTNA. Interacts with TRIM28.

It is found in the cytoplasm. The protein localises to the perinuclear region. Its subcellular location is the nucleus. The protein resides in the cell membrane. Functionally, may enhance ubiquitin ligase activity of RING-type zinc finger-containing E3 ubiquitin-protein ligases. Proposed to act through recruitment and/or stabilization of the Ubl-conjugating enzyme (E2) at the E3:substrate complex. The polypeptide is Melanoma-associated antigen E1 (MAGEE1) (Macaca fascicularis (Crab-eating macaque)).